The sequence spans 310 residues: Fatty acid elongase 1 (310 aa).

The Lumenal portion of the chain corresponds to 1–63 (MVSDWKNFCL…VGKQPLSEPR (63 aa)). A helical membrane pass occupies residues 64 to 84 (PVLLFIAMYYVVIFGGRSLVK). At 85–100 (SCKPLKLRFISQVHNL) the chain is on the cytoplasmic side. A helical membrane pass occupies residues 101–121 (MLTSVSFLWLILMVEQMLPIV). At 122-141 (YRHGLYFAVCNVESWTQPME) the chain is on the lumenal side. A helical transmembrane segment spans residues 142–163 (TLYYLNYMTKFVEFADTVLMVL). Residues 164-174 (KHRKLTFLHTY) lie on the Cytoplasmic side of the membrane. Residues 172–176 (HTYHH) carry the HxxHH motif motif. The helical transmembrane segment at 175–196 (HHGATALLCYNQLVGYTAVTWV) threads the bilayer. At 197–201 (PVTLN) the chain is on the lumenal side. A helical membrane pass occupies residues 202–223 (LAVHVLMYWYYFLSASGIRVWW). Topologically, residues 224-234 (KAWVTRLQIVQ) are cytoplasmic. A helical membrane pass occupies residues 235-255 (FMLDLIVVYYVLYQKIVAAYF). Residues 256-271 (KNACTPQCEDCLGSMT) are Lumenal-facing. The chain crosses the membrane as a helical span at residues 272–292 (AIAAGAAILTSYLFLFISFYI). Residues 293–310 (EVYKRGSASGKKKINKNN) are Cytoplasmic-facing. The short motif at 304-307 (KKIN) is the Di-lysine motif element.

The protein belongs to the ELO family.

It is found in the endoplasmic reticulum membrane. The enzyme catalyses a very-long-chain acyl-CoA + malonyl-CoA + H(+) = a very-long-chain 3-oxoacyl-CoA + CO2 + CoA. The catalysed reaction is tetradecanoyl-CoA + malonyl-CoA + H(+) = 3-oxohexadecanoyl-CoA + CO2 + CoA. It catalyses the reaction (9Z)-tetradecenoyl-CoA + malonyl-CoA + H(+) = 3-oxo-(11Z)-hexadecenoyl-CoA + CO2 + CoA. Functionally, component of a microsomal membrane bound medium-chain fatty acid elongation system, which extends medium-chain-length fatty acids to long-chain fatty acids. Component of elongase I, which extends 12-16-carbon fatty acyl-CoAs such as lauroyl-CoA to 14-18-carbon fatty acids by incorporation of malonyl-CoA. The polypeptide is Fatty acid elongase 1 (Saccharomyces cerevisiae (strain ATCC 204508 / S288c) (Baker's yeast)).